A 186-amino-acid polypeptide reads, in one-letter code: dCTP deaminase (186 aa).

Position 107-112 (107-112) interacts with dCTP; the sequence is KSTYAR. Residue E133 is the Proton donor/acceptor of the active site. Positions 152, 166, 175, and 176 each coordinate dCTP.

This sequence belongs to the dCTP deaminase family. Homotrimer.

The catalysed reaction is dCTP + H2O + H(+) = dUTP + NH4(+). It functions in the pathway pyrimidine metabolism; dUMP biosynthesis; dUMP from dCTP (dUTP route): step 1/2. Functionally, catalyzes the deamination of dCTP to dUTP. The protein is dCTP deaminase of Wolinella succinogenes (strain ATCC 29543 / DSM 1740 / CCUG 13145 / JCM 31913 / LMG 7466 / NCTC 11488 / FDC 602W) (Vibrio succinogenes).